Reading from the N-terminus, the 499-residue chain is Signal recognition particle subunit SRP54 2 (499 aa).

Positions methionine 1–leucine 295 are G-domain. GTP contacts are provided by residues glycine 108–threonine 115, aspartate 190–arginine 194, and threonine 248–aspartate 251. The tract at residues glycine 296–lysine 499 is M-domain.

Belongs to the GTP-binding SRP family. SRP54 subfamily. In terms of assembly, component of a signal recognition particle (SRP) complex that consists of a 7SL RNA molecule of 300 nucleotides and six protein subunits: SRP72, SRP68, SRP54, SRP19, SRP14 and SRP9.

Its subcellular location is the cytoplasm. It localises to the endoplasmic reticulum. It catalyses the reaction GTP + H2O = GDP + phosphate + H(+). Component of the signal recognition particle (SRP) complex, a ribonucleoprotein complex that mediates the cotranslational targeting of secretory and membrane proteins to the endoplasmic reticulum (ER). As part of the SRP complex, associates with the SRP receptor (SR) component SRPRA to target secretory proteins to the endoplasmic reticulum membrane. Binds to the signal sequence of presecretory proteins when they emerge from the ribosomes. Displays basal GTPase activity, and stimulates reciprocal GTPase activation of the SR subunit SRPRA. Forms a guanosine 5'-triphosphate (GTP)-dependent complex with the SR subunit SRPRA. SR compaction and GTPase mediated rearrangement of SR drive SRP-mediated cotranslational protein translocation into the ER. Requires the presence of SRP9/SRP14 and/or SRP19 to stably interact with RNA. The chain is Signal recognition particle subunit SRP54 2 from Solanum lycopersicum (Tomato).